A 194-amino-acid polypeptide reads, in one-letter code: Flagellin A2 (194 aa).

Residues Met1–Gly12 constitute a propeptide that is removed on maturation.

The protein belongs to the archaeal flagellin family. Post-translationally, glycosylated.

It localises to the archaeal flagellum. Its function is as follows. Flagellin is the subunit protein which polymerizes to form the filaments of archaeal flagella. The sequence is that of Flagellin A2 (flaA2) from Halobacterium salinarum (strain ATCC 700922 / JCM 11081 / NRC-1) (Halobacterium halobium).